The following is a 395-amino-acid chain: MFSDLRKKFVFLTMSILIVVVLFLFAVSNRYNQYWDEYDAYRIVKLVAKNDYLGIPGDEPIALVTIDNQKMVKIQSNNTDLTNDVIEKSSLKLLEQGKKSRKWKSFIYSIKEYKDKTYTIAIMDLASYEVPYARRFLILVFTIFGFCLLAAVSLYLSRFIVGPVETEMTREKQFVSDASHELKTPIAAIRANVQVLEQQIPGNRYLDHVVSETKRMEFLIEDLLNLSRLDEKRSKVNFKKLNLSVLCQEVLLTYESLAYEEEKCLNDTIEDDVWIVGEESQIKQILIILLDNAIRHSLSKSEIQFSLKQARRKAILTISNPSAIYSKEVMDNLFERFYQAKDDHADSLSFGLGLSIAKAIVERHKGRIRAYQEKDQLRLEVQLPIDGFWTNTMIN.

Helical transmembrane passes span 9–29 (FVFL…AVSN) and 136–156 (FLIL…SLYL). The Histidine kinase domain occupies 177-387 (DASHELKTPI…RLEVQLPIDG (211 aa)). Residue His180 is modified to Phosphohistidine; by autocatalysis.

It is found in the cell membrane. It carries out the reaction ATP + protein L-histidine = ADP + protein N-phospho-L-histidine.. Its function is as follows. Member of the two-component regulatory system DltS/DltR. Regulates the expression of the dlt operon. Probably phosphorylates DltR. This is Sensor protein DltS (dltS) from Streptococcus agalactiae serotype III (strain NEM316).